A 542-amino-acid chain; its full sequence is Chromatin structure-remodeling complex subunit rsc4 (542 aa).

Residues 6-116 (HNAPFDKTKF…NTANSLESKD (111 aa)) form the Bromo 1 domain. 2 disordered regions span residues 114 to 139 (SKDG…KPGT) and 246 to 327 (ISSF…PIPE). Residues 119-128 (LNEEENEEME) show a composition bias toward acidic residues. The Bromo 2 domain maps to 139–249 (TNEIDVPKVI…QLSSSLISSF (111 aa)). A compositionally biased stretch (basic and acidic residues) spans 252-266 (QPKEHSPATSKHEPE). Residues Ser257, Ser271, Ser287, and Ser313 each carry the phosphoserine modification. The segment covering 268 to 280 (TPASPTPSVSAST) has biased composition (low complexity). A compositionally biased stretch (polar residues) spans 286–298 (TSVAPSFITSDQA). Over residues 304 to 322 (LKSEEAHVESFSKESEKDQ) the composition is skewed to basic and acidic residues.

Component of the RSC complex composed of at least arp9, arp42, rsc1, rsc4, rsc7, rsc9, rsc58, sfh1, snf21, ssr1, ssr2, ssr3 and ssr4. The complex interacts with histone and histone variant components of centromeric chromatin.

The protein localises to the nucleus. Its function is as follows. Component of the chromatin structure remodeling complex (RSC), which is involved in transcription regulation and nucleosome positioning. Controls particularly membrane and organelle development genes. The sequence is that of Chromatin structure-remodeling complex subunit rsc4 (rsc4) from Schizosaccharomyces pombe (strain 972 / ATCC 24843) (Fission yeast).